Consider the following 33-residue polypeptide: Toxin BcV (33 aa).

Residues C6 and C30 are joined by a disulfide bond.

The protein localises to the secreted. It localises to the nematocyst. Its function is as follows. Potently and reversibly blocks mammalian Kv11/KCNH/ERG voltage-gated potassium channels. Acts as a gating-modifier toxin that shifts the voltage-dependence of ERG activation in the positive direction and suppresses its current amplitudes elicited by strong depolarizing pulses that maximally activate the channels. This is Toxin BcV from Bunodosoma caissarum (Sea anemone).